A 187-amino-acid polypeptide reads, in one-letter code: MKVLLGISGSSSVNLGLKLLKNLENQCELYCILTQGAKLNFKTENQANLEEICQENFKYTHFLDDKNLSLSVASGSFGIEKTIIAPCSISSLAKIHAGFADTLLMRAAAVALKERKKLILGVREMPFSTLNLEHMLKLSQMGVIIAPPIIASYSKANNLEQMENFIAGKWLDLLEIKHNLYEKWQNF.

FMN contacts are provided by residues 9–11 (GSS), threonine 34, 88–91 (SISS), and arginine 123. Dimethylallyl phosphate is bound by residues tyrosine 153 and lysine 169.

Belongs to the UbiX/PAD1 family.

The enzyme catalyses dimethylallyl phosphate + FMNH2 = prenylated FMNH2 + phosphate. In terms of biological role, flavin prenyltransferase that catalyzes the synthesis of the prenylated FMN cofactor (prenyl-FMN) for 4-hydroxy-3-polyprenylbenzoic acid decarboxylase UbiD. The prenyltransferase is metal-independent and links a dimethylallyl moiety from dimethylallyl monophosphate (DMAP) to the flavin N5 and C6 atoms of FMN. This Campylobacter jejuni subsp. jejuni serotype O:2 (strain ATCC 700819 / NCTC 11168) protein is Flavin prenyltransferase UbiX.